A 310-amino-acid chain; its full sequence is ADP-L-glycero-D-manno-heptose-6-epimerase (310 aa).

Residues 10-11, 31-32, Lys-38, Lys-53, 75-79, and Asn-92 each bind NADP(+); these read FI, DN, and EGACS. Catalysis depends on Tyr-140, which acts as the Proton acceptor. Position 144 (Lys-144) interacts with NADP(+). Asn-169 lines the substrate pocket. 2 residues coordinate NADP(+): Val-170 and Lys-178. Lys-178 acts as the Proton acceptor in catalysis. Substrate is bound by residues Ser-180, His-187, 201 to 204, and Arg-209; that span reads FEGS. Lys-267 is subject to N6-acetyllysine. Residue Tyr-272 coordinates substrate.

The protein belongs to the NAD(P)-dependent epimerase/dehydratase family. HldD subfamily. In terms of assembly, homopentamer. The cofactor is NADP(+).

It catalyses the reaction ADP-D-glycero-beta-D-manno-heptose = ADP-L-glycero-beta-D-manno-heptose. The protein operates within nucleotide-sugar biosynthesis; ADP-L-glycero-beta-D-manno-heptose biosynthesis; ADP-L-glycero-beta-D-manno-heptose from D-glycero-beta-D-manno-heptose 7-phosphate: step 4/4. Catalyzes the interconversion between ADP-D-glycero-beta-D-manno-heptose and ADP-L-glycero-beta-D-manno-heptose via an epimerization at carbon 6 of the heptose. The protein is ADP-L-glycero-D-manno-heptose-6-epimerase of Shigella boydii serotype 18 (strain CDC 3083-94 / BS512).